The sequence spans 412 residues: Membrane fusion protein MtrC (412 aa).

An N-terminal signal peptide occupies residues 1–24 (MAFYASKAMRAAALAAAVALALSS). A lipid anchor (N-palmitoyl cysteine) is attached at C25. The S-diacylglycerol cysteine moiety is linked to residue C25. The interval 377 to 412 (AKKVTPKEWAPSENQAAAPQAGVQTASEAKPASEAK) is disordered. The segment covering 388 to 403 (SENQAAAPQAGVQTAS) has biased composition (polar residues).

The protein belongs to the membrane fusion protein (MFP) (TC 8.A.1) family.

Its subcellular location is the cell inner membrane. Its function is as follows. Cell membrane lipoprotein, involved in cell membrane permeability to hydrophobic compounds such as antibiotics, dyes and detergents. The sequence is that of Membrane fusion protein MtrC (mtrC) from Neisseria gonorrhoeae.